Here is a 255-residue protein sequence, read N- to C-terminus: 5-oxoprolinase subunit A (255 aa).

This sequence belongs to the LamB/PxpA family. As to quaternary structure, forms a complex composed of PxpA, PxpB and PxpC.

It catalyses the reaction 5-oxo-L-proline + ATP + 2 H2O = L-glutamate + ADP + phosphate + H(+). Its function is as follows. Catalyzes the cleavage of 5-oxoproline to form L-glutamate coupled to the hydrolysis of ATP to ADP and inorganic phosphate. This chain is 5-oxoprolinase subunit A, found in Campylobacter jejuni subsp. doylei (strain ATCC BAA-1458 / RM4099 / 269.97).